The primary structure comprises 258 residues: MLAKRIIPCLDVRDGQVVKGVQFRNHEIIGDIVPLAKRYADEGADELVFYDITASSDGRVVDKSWVSRVAEVIDIPFCVAGGIRSIDDAAKILSFGADKISVNSPALSDPTLITRLADRFGVQCIVVGIDTWFDDATGKYHVNQYTGDENRTRVTQWETLDWVQEVQQRGAGEIVLNMMNQDGVRNGYDLTQLKKVRDVCRVPLIASGGAGTMEHFLEAFRDADVDGALAASVFHKQIINIGELKAYLAGQGVEIRIC.

Residues aspartate 11 and aspartate 130 contribute to the active site.

The protein belongs to the HisA/HisF family. As to quaternary structure, heterodimer of HisH and HisF.

The protein localises to the cytoplasm. It catalyses the reaction 5-[(5-phospho-1-deoxy-D-ribulos-1-ylimino)methylamino]-1-(5-phospho-beta-D-ribosyl)imidazole-4-carboxamide + L-glutamine = D-erythro-1-(imidazol-4-yl)glycerol 3-phosphate + 5-amino-1-(5-phospho-beta-D-ribosyl)imidazole-4-carboxamide + L-glutamate + H(+). The protein operates within amino-acid biosynthesis; L-histidine biosynthesis; L-histidine from 5-phospho-alpha-D-ribose 1-diphosphate: step 5/9. Functionally, IGPS catalyzes the conversion of PRFAR and glutamine to IGP, AICAR and glutamate. The HisF subunit catalyzes the cyclization activity that produces IGP and AICAR from PRFAR using the ammonia provided by the HisH subunit. The polypeptide is Imidazole glycerol phosphate synthase subunit HisF (Salmonella arizonae (strain ATCC BAA-731 / CDC346-86 / RSK2980)).